The primary structure comprises 351 residues: uncharacterized protein (351 aa).

Residues 1–32 form the signal peptide; sequence MKNKKRVFIASSLSCVLLLLSAANTEANSANK. A disordered region spans residues 26–74; sequence EANSANKDSQDQTKKEHVDKAQQKEKRNVNDKDKNTPGPDDIGKNGKVT. Basic and acidic residues predominate over residues 33-60; that stretch reads DSQDQTKKEHVDKAQQKEKRNVNDKDKN.

The protein belongs to the aerolysin family.

This is an uncharacterized protein from Staphylococcus aureus (strain MRSA252).